A 74-amino-acid chain; its full sequence is DUP240 protein DFP2 (74 aa).

The protein belongs to the DUP/COS family.

The protein localises to the cytoplasm. The protein resides in the membrane. The chain is DUP240 protein DFP2 from Saccharomyces cerevisiae (strain ATCC 204508 / S288c) (Baker's yeast).